A 296-amino-acid chain; its full sequence is Phosphatidylglycerol--prolipoprotein diacylglyceryl transferase (296 aa).

Transmembrane regions (helical) follow at residues 10 to 30, 57 to 77, 92 to 112, and 119 to 139; these read IAFSLGPVKVHWYGLMYLAAF, LLFYGMLGVVLGGRIGYMLFY, VWEGGMSFHGGLLGVLVACWL, and LHFFDVMDFVAPLVPLGLGFG. Residue Arg140 participates in a 1,2-diacyl-sn-glycero-3-phospho-(1'-sn-glycerol) binding. A run of 3 helical transmembrane segments spans residues 194-214, 220-240, and 254-274; these read QLYEAALEGVVMFVVLWTFSM, YALSGLFALLYGVFRFIVEFV, and WLTMGQILSLPLIAVGLALLA.

Belongs to the Lgt family.

The protein resides in the cell inner membrane. It carries out the reaction L-cysteinyl-[prolipoprotein] + a 1,2-diacyl-sn-glycero-3-phospho-(1'-sn-glycerol) = an S-1,2-diacyl-sn-glyceryl-L-cysteinyl-[prolipoprotein] + sn-glycerol 1-phosphate + H(+). It functions in the pathway protein modification; lipoprotein biosynthesis (diacylglyceryl transfer). Its function is as follows. Catalyzes the transfer of the diacylglyceryl group from phosphatidylglycerol to the sulfhydryl group of the N-terminal cysteine of a prolipoprotein, the first step in the formation of mature lipoproteins. The chain is Phosphatidylglycerol--prolipoprotein diacylglyceryl transferase from Xanthomonas oryzae pv. oryzae (strain MAFF 311018).